We begin with the raw amino-acid sequence, 73 residues long: Large ribosomal subunit protein eL20 (73 aa).

The protein belongs to the eukaryotic ribosomal protein eL20 family. As to quaternary structure, part of the 50S ribosomal subunit. Binds 23S rRNA.

This chain is Large ribosomal subunit protein eL20, found in Methanococcus aeolicus (strain ATCC BAA-1280 / DSM 17508 / OCM 812 / Nankai-3).